Here is a 305-residue protein sequence, read N- to C-terminus: Homeobox protein ceh-23 (305 aa).

Disordered regions lie at residues 113 to 140 and 262 to 305; these read ASCP…ERRR and RRSK…KVLN. The span at 120–135 shows a compositional bias: polar residues; sequence ASSQATVTLQVPSTGS. The segment at residues 211–270 is a DNA-binding region (homeobox); it reads HRKARTIYGTTQTQQLEDMFKGQMYVVGAERENLAQRLGLSPSQVRIWFQNRRSKHRRKQ. Over residues 287–305 the composition is skewed to acidic residues; that stretch reads GKDEEEDDEEDEDDVKVLN.

The protein belongs to the distal-less homeobox family.

The protein resides in the nucleus. Probable transcription factor. Required for differentiation of AIY interneurons, acting downstream of LIM/homeobox protein ttx-3. Modulates gene expression, acting downstream of AMP kinase aak-2/AMPK signaling. Modulates lifespan. The chain is Homeobox protein ceh-23 (ceh-23) from Caenorhabditis elegans.